Reading from the N-terminus, the 180-residue chain is Ribulose bisphosphate carboxylase small subunit, chloroplastic (180 aa).

Residues 1 to 57 (MASVVASAAVVTPFAASAASTTKSSQIVSVQAGLKAGVFGGKSEWQTKTQTNGSRVS) constitute a chloroplast transit peptide.

This sequence belongs to the RuBisCO small chain family. Heterohexadecamer of 8 large and 8 small subunits.

Its subcellular location is the plastid. It localises to the chloroplast. RuBisCO catalyzes two reactions: the carboxylation of D-ribulose 1,5-bisphosphate, the primary event in carbon dioxide fixation, as well as the oxidative fragmentation of the pentose substrate. Both reactions occur simultaneously and in competition at the same active site. Although the small subunit is not catalytic it is essential for maximal activity. The protein is Ribulose bisphosphate carboxylase small subunit, chloroplastic of Marchantia paleacea (Liverwort).